Consider the following 128-residue polypeptide: UPF0212 protein TGAM_1344 (128 aa).

The protein belongs to the UPF0212 family.

The protein is UPF0212 protein TGAM_1344 of Thermococcus gammatolerans (strain DSM 15229 / JCM 11827 / EJ3).